A 429-amino-acid polypeptide reads, in one-letter code: MANVTVIGAQWGDEGKGKIVDWLAERAHVVVRFQGGHNAGHTLVVGNQTYKLSLLPSGIVRGTLSVIGNGVVFDPWHFRDEVAKLQGQGVTITPDNLQIAETAPLILPFHRDLDGLREDASGSGKIGTTRRGIGPAYEDKVGRRAIRVCDLAHLDDLELQLDRICAHHDALRAGFNEPPIDREALKAQLAEIADFILPFAKPVWLTLNEARKAGRRILFEGAQGVLLDIDHGTYPFVTSSNTIAGTASGGSGLGPSAAGFVLGIVKAYTTRVGSGPFPSELEDEMGQRLGERGHEFGTVTGRKRRCGWFDAVLVRQSAAVSGITGVALTKLDVLDGFDEIKICTGYELDGKTYDYLPPHPQDQARVTPIYETIEGWSQSTAGARSWAELPAQAIKYIRRVEELIQCPVALVSTSPEREDTILVRDPFAD.

Residues 12–18 (GDEGKGK) and 40–42 (GHT) each bind GTP. The Proton acceptor role is filled by Asp13. Asp13 and Gly40 together coordinate Mg(2+). IMP-binding positions include 13 to 16 (DEGK), 38 to 41 (NAGH), Thr129, Arg143, Gln223, Thr238, and Arg302. Catalysis depends on His41, which acts as the Proton donor. Position 298-304 (298-304 (TVTGRKR)) interacts with substrate. GTP is bound by residues Arg304, 330–332 (KLD), and 412–414 (STS).

The protein belongs to the adenylosuccinate synthetase family. In terms of assembly, homodimer. Mg(2+) is required as a cofactor.

It is found in the cytoplasm. It catalyses the reaction IMP + L-aspartate + GTP = N(6)-(1,2-dicarboxyethyl)-AMP + GDP + phosphate + 2 H(+). Its pathway is purine metabolism; AMP biosynthesis via de novo pathway; AMP from IMP: step 1/2. Its function is as follows. Plays an important role in the de novo pathway of purine nucleotide biosynthesis. Catalyzes the first committed step in the biosynthesis of AMP from IMP. The polypeptide is Adenylosuccinate synthetase (Rhizorhabdus wittichii (strain DSM 6014 / CCUG 31198 / JCM 15750 / NBRC 105917 / EY 4224 / RW1) (Sphingomonas wittichii)).